A 621-amino-acid polypeptide reads, in one-letter code: UvrABC system protein C (621 aa).

Residues 13 to 92 (EKPGVYMMRN…IKENRPKYNV (80 aa)) form the GIY-YIG domain. The UVR domain maps to 205–240 (DELVRKIEEKMKAAAISMDFENAARYRDQIIALNNI).

This sequence belongs to the UvrC family. Interacts with UvrB in an incision complex.

Its subcellular location is the cytoplasm. Functionally, the UvrABC repair system catalyzes the recognition and processing of DNA lesions. UvrC both incises the 5' and 3' sides of the lesion. The N-terminal half is responsible for the 3' incision and the C-terminal half is responsible for the 5' incision. The chain is UvrABC system protein C from Alkaliphilus oremlandii (strain OhILAs) (Clostridium oremlandii (strain OhILAs)).